Here is a 166-residue protein sequence, read N- to C-terminus: Large ribosomal subunit protein uL10 (166 aa).

Belongs to the universal ribosomal protein uL10 family. In terms of assembly, part of the ribosomal stalk of the 50S ribosomal subunit. The N-terminus interacts with L11 and the large rRNA to form the base of the stalk. The C-terminus forms an elongated spine to which L12 dimers bind in a sequential fashion forming a multimeric L10(L12)X complex.

In terms of biological role, forms part of the ribosomal stalk, playing a central role in the interaction of the ribosome with GTP-bound translation factors. The protein is Large ribosomal subunit protein uL10 of Streptococcus pneumoniae (strain 70585).